The chain runs to 400 residues: CCA-adding enzyme (400 aa).

Residues Gly-28 and Arg-31 each contribute to the ATP site. CTP-binding residues include Gly-28 and Arg-31. Mg(2+)-binding residues include Asp-41 and Asp-43. Positions 112, 155, 158, 161, and 164 each coordinate ATP. Arg-112, Asp-155, Arg-158, Arg-161, and Arg-164 together coordinate CTP.

This sequence belongs to the tRNA nucleotidyltransferase/poly(A) polymerase family. Bacterial CCA-adding enzyme type 3 subfamily. As to quaternary structure, homodimer. It depends on Mg(2+) as a cofactor.

The catalysed reaction is a tRNA precursor + 2 CTP + ATP = a tRNA with a 3' CCA end + 3 diphosphate. The enzyme catalyses a tRNA with a 3' CCA end + 2 CTP + ATP = a tRNA with a 3' CCACCA end + 3 diphosphate. In terms of biological role, catalyzes the addition and repair of the essential 3'-terminal CCA sequence in tRNAs without using a nucleic acid template. Adds these three nucleotides in the order of C, C, and A to the tRNA nucleotide-73, using CTP and ATP as substrates and producing inorganic pyrophosphate. tRNA 3'-terminal CCA addition is required both for tRNA processing and repair. Also involved in tRNA surveillance by mediating tandem CCA addition to generate a CCACCA at the 3' terminus of unstable tRNAs. While stable tRNAs receive only 3'-terminal CCA, unstable tRNAs are marked with CCACCA and rapidly degraded. This is CCA-adding enzyme from Staphylococcus aureus (strain MRSA252).